A 460-amino-acid polypeptide reads, in one-letter code: GTPase Der (460 aa).

EngA-type G domains are found at residues 2-164 (QSII…HEEF) and 196-368 (IRVG…ENFT). Residues 8–15 (GKPNVGKS), 55–59 (DSGGL), 116–119 (NKVD), 202–209 (GRVNVGKS), 249–253 (DTAGI), and 313–316 (NKWD) contribute to the GTP site. Residues 369–453 (QKIQTSKLNT…PLVIASRKKG (85 aa)) form the KH-like domain.

This sequence belongs to the TRAFAC class TrmE-Era-EngA-EngB-Septin-like GTPase superfamily. EngA (Der) GTPase family. In terms of assembly, associates with the 50S ribosomal subunit.

Functionally, GTPase that plays an essential role in the late steps of ribosome biogenesis. This is GTPase Der from Campylobacter jejuni subsp. jejuni serotype O:6 (strain 81116 / NCTC 11828).